The sequence spans 327 residues: Methionyl-tRNA formyltransferase (327 aa).

121–124 lines the (6S)-5,6,7,8-tetrahydrofolate pocket; sequence SLLP.

This sequence belongs to the Fmt family.

The enzyme catalyses L-methionyl-tRNA(fMet) + (6R)-10-formyltetrahydrofolate = N-formyl-L-methionyl-tRNA(fMet) + (6S)-5,6,7,8-tetrahydrofolate + H(+). Functionally, attaches a formyl group to the free amino group of methionyl-tRNA(fMet). The formyl group appears to play a dual role in the initiator identity of N-formylmethionyl-tRNA by promoting its recognition by IF2 and preventing the misappropriation of this tRNA by the elongation apparatus. The sequence is that of Methionyl-tRNA formyltransferase from Burkholderia ambifaria (strain ATCC BAA-244 / DSM 16087 / CCUG 44356 / LMG 19182 / AMMD) (Burkholderia cepacia (strain AMMD)).